The chain runs to 627 residues: tRNA uridine 5-carboxymethylaminomethyl modification enzyme MnmG (627 aa).

FAD contacts are provided by residues 16 to 21 (GAGHAG), valine 128, and serine 183. 277 to 291 (GPRYCPSIEDKIVRF) serves as a coordination point for NAD(+). Glutamine 374 lines the FAD pocket.

It belongs to the MnmG family. Homodimer. Heterotetramer of two MnmE and two MnmG subunits. It depends on FAD as a cofactor.

It is found in the cytoplasm. Its function is as follows. NAD-binding protein involved in the addition of a carboxymethylaminomethyl (cmnm) group at the wobble position (U34) of certain tRNAs, forming tRNA-cmnm(5)s(2)U34. This Finegoldia magna (strain ATCC 29328 / DSM 20472 / WAL 2508) (Peptostreptococcus magnus) protein is tRNA uridine 5-carboxymethylaminomethyl modification enzyme MnmG.